We begin with the raw amino-acid sequence, 1883 residues long: Zinc finger protein 106 (1883 aa).

Residues isoleucine 6 and lysine 37 each participate in a glycyl lysine isopeptide (Lys-Gly) (interchain with G-Cter in SUMO2) cross-link. The C2H2-type 1; atypical zinc finger occupies 20–44 (HECRVCGVTEVGLSAYAKHISGQLH). The segment at 39 to 162 (ISGQLHKDNV…NGGGPRGRSG (124 aa)) is disordered. Over residues 52 to 67 (EREDDGKGEEEEEDYF) the composition is skewed to acidic residues. Glycyl lysine isopeptide (Lys-Gly) (interchain with G-Cter in SUMO2) cross-links involve residues lysine 69 and lysine 76. Basic and acidic residues-rich tracts occupy residues 77-86 (QRKEQSRQDE), 96-116 (SDDR…DRES), and 128-138 (PQRDWKWEKDG). Lysine 133 participates in a covalent cross-link: Glycyl lysine isopeptide (Lys-Gly) (interchain with G-Cter in SUMO2). The segment covering 139–148 (FNNTRKNSFP) has biased composition (polar residues). Residues lysine 243, lysine 287, and lysine 305 each participate in a glycyl lysine isopeptide (Lys-Gly) (interchain with G-Cter in SUMO2) cross-link. Positions 322 to 338 (QTTKQADTATSKVSGKN) are enriched in polar residues. Residues 322–356 (QTTKQADTATSKVSGKNGSAAREKPRRWTPYPSQK) form a disordered region. Residues lysine 356, lysine 365, lysine 371, and lysine 417 each participate in a glycyl lysine isopeptide (Lys-Gly) (interchain with G-Cter in SUMO2) cross-link. Residues 389–423 (IQEPQTDETRNSPTQKTQKEIHTGSLNHKASSDSA) are disordered. Residues 412–423 (GSLNHKASSDSA) are compositionally biased toward polar residues. Serine 422 bears the Phosphoserine mark. Glycyl lysine isopeptide (Lys-Gly) (interchain with G-Cter in SUMO2) cross-links involve residues lysine 451, lysine 461, lysine 477, lysine 492, lysine 505, lysine 515, lysine 525, lysine 539, and lysine 557. The interval 457–501 (CPATKSLSQKQDPKNISKNTKTNFFSPGEHSNPSNKPTVEDNHGP) is disordered. The span at 461-493 (KSLSQKQDPKNISKNTKTNFFSPGEHSNPSNKP) shows a compositional bias: polar residues. Residues 586-637 (LEDESDGETSDTEKHGTKIGTLGSATTELLSGSTRTADEKEEDDRILKTSRE) are disordered. Position 590 is a phosphoserine (serine 590). A Glycyl lysine isopeptide (Lys-Gly) (interchain with G-Cter in SUMO2) cross-link involves residue lysine 603. Polar residues predominate over residues 608-620 (GSATTELLSGSTR). Serine 641 and serine 661 each carry phosphoserine. Glycyl lysine isopeptide (Lys-Gly) (interchain with G-Cter in SUMO2) cross-links involve residues lysine 671, lysine 684, lysine 705, lysine 721, lysine 741, lysine 775, and lysine 807. 4 positions are modified to phosphoserine: serine 859, serine 861, serine 864, and serine 893. Positions 879 to 945 (EEGTGKENEP…HSAQLSSDHI (67 aa)) are disordered. Polar residues predominate over residues 888–906 (PQQMVSPSNSLRAGQSQKA). Residues lysine 905 and lysine 911 each participate in a glycyl lysine isopeptide (Lys-Gly) (interchain with G-Cter in SUMO2) cross-link. A Phosphoserine modification is found at serine 937. Lysine 953 participates in a covalent cross-link: Glycyl lysine isopeptide (Lys-Gly) (interchain with G-Cter in SUMO2). The span at 958-976 (QERSIPPSENQNSQESNGE) shows a compositional bias: polar residues. Disordered stretches follow at residues 958 to 982 (QERS…CLSS), 997 to 1048 (ATDS…KERS), 1121 to 1140 (EPSE…RRNS), and 1182 to 1218 (PTFQ…VPPS). A Phosphothreonine modification is found at threonine 1021. Serine 1025, serine 1026, and serine 1031 each carry phosphoserine. Residues 1035–1045 (KNKRRKIKGKK) are compositionally biased toward basic residues. A Phosphoserine modification is found at serine 1249. The interval 1252 to 1483 (ESTESFHEPS…EVSSTSEIGT (232 aa)) is disordered. Basic and acidic residues predominate over residues 1255–1277 (ESFHEPSQELKFSVEQRNTRNRE). Lysine 1265 participates in a covalent cross-link: Glycyl lysine isopeptide (Lys-Gly) (interchain with G-Cter in SUMO2). 2 stretches are compositionally biased toward polar residues: residues 1278–1291 (NSPS…SSIN) and 1299–1312 (KGNS…SSFL). Serine 1279, serine 1281, and serine 1284 each carry phosphoserine. Lysine 1299 is covalently cross-linked (Glycyl lysine isopeptide (Lys-Gly) (interchain with G-Cter in SUMO2)). The residue at position 1302 (serine 1302) is a Phosphoserine. Lysine 1324 is covalently cross-linked (Glycyl lysine isopeptide (Lys-Gly) (interchain with G-Cter in SUMO2)). Serine 1328 is subject to Phosphoserine. Polar residues predominate over residues 1333 to 1346 (PEQQAESTLTSAET). The segment covering 1349–1362 (SKKKKKLRKKKSLR) has biased composition (basic residues). Residue serine 1370 is modified to Phosphoserine. A Phosphothreonine modification is found at threonine 1372. Glycyl lysine isopeptide (Lys-Gly) (interchain with G-Cter in SUMO2) cross-links involve residues lysine 1380, lysine 1392, and lysine 1395. Basic and acidic residues-rich tracts occupy residues 1402–1416 (EDSR…VRDE) and 1444–1456 (GEEK…KKDI). Residue lysine 1454 forms a Glycyl lysine isopeptide (Lys-Gly) (interchain with G-Cter in SUMO2) linkage. Polar residues predominate over residues 1457–1481 (WNSTEQNPLETSRSGCDEVSSTSEI). Position 1468 is a phosphoserine (serine 1468). Glycyl lysine isopeptide (Lys-Gly) (interchain with G-Cter in SUMO2) cross-links involve residues lysine 1486 and lysine 1504. The span at 1502-1513 (SIKGSKNSSEIS) shows a compositional bias: polar residues. Residues 1502–1527 (SIKGSKNSSEISSEPGDDDEPTEGSF) form a disordered region. WD repeat units follow at residues 1529–1568 (GHQA…GVFE), 1570–1611 (HTSK…CVEQ), 1654–1695 (HGPR…LLRT), 1698–1737 (GHSK…RIYK), 1738–1775 (GHNH…RLQV), and 1778–1815 (GHKD…NYRC). Residue lysine 1585 forms a Glycyl lysine isopeptide (Lys-Gly) (interchain with G-Cter in SUMO2) linkage. Residue lysine 1737 forms a Glycyl lysine isopeptide (Lys-Gly) (interchain with G-Cter in SUMO2) linkage. The segment at 1813–1838 (YRCWWHGCSLIFGVVDHLKQHLLTDH) adopts a C2H2-type 2; atypical zinc-finger fold. Residue lysine 1864 forms a Glycyl lysine isopeptide (Lys-Gly) (interchain with G-Cter in SUMO2) linkage.

As to quaternary structure, interacts with KNOP1. Interacts with TARDBP and NUP107. Interacts (via N-terminus) with RBM39. Interacts with the SH3 domains of FYN and GRB2. In terms of processing, phosphorylated by FYN in vitro.

The protein resides in the nucleus. The protein localises to the nucleolus. It localises to the nucleus speckle. Its function is as follows. RNA-binding protein. Specifically binds to 5'-GGGGCC-3' sequence repeats in RNA. Essential for maintenance of peripheral motor neuron and skeletal muscle function. Required for normal expression and/or alternative splicing of a number of genes in spinal cord and skeletal muscle, including the neurite outgrowth inhibitor RTN4. Also contributes to normal mitochondrial respiratory function in motor neurons, via an unknown mechanism. The protein is Zinc finger protein 106 (ZNF106) of Homo sapiens (Human).